The chain runs to 374 residues: S-adenosylmethionine:tRNA ribosyltransferase-isomerase (374 aa).

Belongs to the QueA family. In terms of assembly, monomer.

It is found in the cytoplasm. The enzyme catalyses 7-aminomethyl-7-carbaguanosine(34) in tRNA + S-adenosyl-L-methionine = epoxyqueuosine(34) in tRNA + adenine + L-methionine + 2 H(+). It participates in tRNA modification; tRNA-queuosine biosynthesis. Its function is as follows. Transfers and isomerizes the ribose moiety from AdoMet to the 7-aminomethyl group of 7-deazaguanine (preQ1-tRNA) to give epoxyqueuosine (oQ-tRNA). This is S-adenosylmethionine:tRNA ribosyltransferase-isomerase from Sorangium cellulosum (strain So ce56) (Polyangium cellulosum (strain So ce56)).